A 146-amino-acid chain; its full sequence is Heat-stable 19 kDa antigen (146 aa).

An N-terminal signal peptide occupies residues 1–20 (MKFSLLSAIAAAVFVPFTSA).

Belongs to the cerato-platanin family. Glycosylated.

The protein resides in the secreted. This is Heat-stable 19 kDa antigen (CSA) from Coccidioides posadasii (strain C735) (Valley fever fungus).